A 263-amino-acid chain; its full sequence is Peptidoglycan-N-acetylmuramic acid deacetylase PdaA (263 aa).

Positions 1–23 (MKWMCSICCAAVLLAGGAAQAEA) are cleaved as a signal peptide. In terms of domain architecture, NodB homology spans 66–247 (KTIYLTFDNG…DLKKQGYTFK (182 aa)). Residue aspartate 73 is the Proton acceptor of the active site. The a divalent metal cation site is built by histidine 124 and histidine 128. The active-site Proton donor is the histidine 222.

The protein belongs to the polysaccharide deacetylase family.

Its function is as follows. Catalyzes the deacetylation of N-acetylmuramic acid (MurNAc) residues in glycan strands of peptidoglycan, leading to the formation of muramic delta-lactam residues in spore cortex, after transpeptidation of deacetylated muramic acid residues. PdaA probably carries out both deacetylation and lactam ring formation and requires the product of CwlD activity on peptidoglycan as a substrate. Is required for germination. Cannot use chitin oligomer (hexa-N-acetylchitohexaose) as a substrate. The sequence is that of Peptidoglycan-N-acetylmuramic acid deacetylase PdaA (pdaA) from Bacillus subtilis (strain 168).